We begin with the raw amino-acid sequence, 467 residues long: NADH-quinone oxidoreductase subunit H (467 aa).

9 helical membrane-spanning segments follow: residues 18 to 38 (WWLV…TVLF), 88 to 108 (AVYV…IAVI), 131 to 151 (LPIA…GIVL), 172 to 192 (MISY…YSGS), 206 to 226 (WYIV…VGET), 256 to 276 (FMLA…TLFL), 296 to 316 (WWPL…FIWL), 328 to 348 (LMKL…MLVA), and 363 to 383 (IALY…LVDM). Positions 389–467 (GKAADQPAET…PTDGKEASDG (79 aa)) are disordered. Residues 418 to 430 (PVPPMPGQQVPPV) show a composition bias toward pro residues.

The protein belongs to the complex I subunit 1 family. NDH-1 is composed of 14 different subunits. Subunits NuoA, H, J, K, L, M, N constitute the membrane sector of the complex.

It localises to the cell membrane. The enzyme catalyses a quinone + NADH + 5 H(+)(in) = a quinol + NAD(+) + 4 H(+)(out). Functionally, NDH-1 shuttles electrons from NADH, via FMN and iron-sulfur (Fe-S) centers, to quinones in the respiratory chain. The immediate electron acceptor for the enzyme in this species is believed to be ubiquinone. Couples the redox reaction to proton translocation (for every two electrons transferred, four hydrogen ions are translocated across the cytoplasmic membrane), and thus conserves the redox energy in a proton gradient. This subunit may bind ubiquinone. This chain is NADH-quinone oxidoreductase subunit H, found in Streptomyces coelicolor (strain ATCC BAA-471 / A3(2) / M145).